The following is a 351-amino-acid chain: Photosystem II D2 protein (351 aa).

Residues 39 to 59 (CAYLALGAWFTGTTFVSSWYT) traverse the membrane as a helical segment. Histidine 116 serves as a coordination point for chlorophyll a. Residues 123 to 139 (GFCLRQFEIARLVGLRP) traverse the membrane as a helical segment. Residues glutamine 128 and asparagine 141 each contribute to the pheophytin a site. A helical membrane pass occupies residues 151-164 (VFVSVFLLYPLGQA). Histidine 196 serves as a coordination point for chlorophyll a. The chain crosses the membrane as a helical span at residues 206–226 (GALLCAIHGATVENTLFEDGE). The a plastoquinone site is built by histidine 213 and phenylalanine 260. Histidine 213 lines the Fe cation pocket. Histidine 267 lines the Fe cation pocket. Residues 277–293 (GLWVSSIGIVGLALNLR) form a helical membrane-spanning segment.

The protein belongs to the reaction center PufL/M/PsbA/D family. In terms of assembly, PSII is composed of 1 copy each of membrane proteins PsbA, PsbB, PsbC, PsbD, PsbE, PsbF, PsbH, PsbI, PsbJ, PsbK, PsbL, PsbM, PsbT, PsbY, PsbZ, Psb30/Ycf12, at least 3 peripheral proteins of the oxygen-evolving complex and a large number of cofactors. It forms dimeric complexes. The D1/D2 heterodimer binds P680, chlorophylls that are the primary electron donor of PSII, and subsequent electron acceptors. It shares a non-heme iron and each subunit binds pheophytin, quinone, additional chlorophylls, carotenoids and lipids. There is also a Cl(-1) ion associated with D1 and D2, which is required for oxygen evolution. The PSII complex binds additional chlorophylls, carotenoids and specific lipids. is required as a cofactor.

The protein resides in the plastid. The protein localises to the chloroplast thylakoid membrane. It catalyses the reaction 2 a plastoquinone + 4 hnu + 2 H2O = 2 a plastoquinol + O2. Functionally, photosystem II (PSII) is a light-driven water:plastoquinone oxidoreductase that uses light energy to abstract electrons from H(2)O, generating O(2) and a proton gradient subsequently used for ATP formation. It consists of a core antenna complex that captures photons, and an electron transfer chain that converts photonic excitation into a charge separation. The D1/D2 (PsbA/PsbD) reaction center heterodimer binds P680, the primary electron donor of PSII as well as several subsequent electron acceptors. D2 is needed for assembly of a stable PSII complex. This is Photosystem II D2 protein from Cyanidium caldarium (Red alga).